Here is a 1071-residue protein sequence, read N- to C-terminus: Carbamoyl phosphate synthase large chain (1071 aa).

Residues 1–399 (MPKREDIKKV…SLLKAFKSLD (399 aa)) are carboxyphosphate synthetic domain. Arginine 129, arginine 169, glycine 175, glycine 176, glutamate 208, valine 210, glutamate 215, glycine 241, valine 242, histidine 243, glutamine 284, and glutamate 296 together coordinate ATP. One can recognise an ATP-grasp 1 domain in the interval 133-325 (KETMLRIGEK…IARVTAKIAI (193 aa)). Mg(2+) is bound by residues glutamine 284, glutamate 296, and asparagine 298. Residues glutamine 284, glutamate 296, and asparagine 298 each coordinate Mn(2+). Positions 400–540 (IDNQLGNKHW…YSTYEDSCET (141 aa)) are oligomerization domain. Positions 541–932 (NATTDKKKIL…YKAELAADNV (392 aa)) are carbamoyl phosphate synthetic domain. The ATP-grasp 2 domain maps to 673–864 (YILMKELGVP…LAKIAAKVIA (192 aa)). The ATP site is built by arginine 709, aspartate 748, leucine 750, glutamate 755, glycine 780, valine 781, histidine 782, serine 783, glutamine 823, and glutamate 835. Mg(2+) is bound by residues glutamine 823, glutamate 835, and asparagine 837. Mn(2+)-binding residues include glutamine 823, glutamate 835, and asparagine 837. The region spanning 931–1071 (NVLPLTGKVF…INEYHKEMEN (141 aa)) is the MGS-like domain. The interval 933 to 1071 (LPLTGKVFLS…INEYHKEMEN (139 aa)) is allosteric domain.

It belongs to the CarB family. Composed of two chains; the small (or glutamine) chain promotes the hydrolysis of glutamine to ammonia, which is used by the large (or ammonia) chain to synthesize carbamoyl phosphate. Tetramer of heterodimers (alpha,beta)4. Requires Mg(2+) as cofactor. Mn(2+) serves as cofactor.

It catalyses the reaction hydrogencarbonate + L-glutamine + 2 ATP + H2O = carbamoyl phosphate + L-glutamate + 2 ADP + phosphate + 2 H(+). It carries out the reaction hydrogencarbonate + NH4(+) + 2 ATP = carbamoyl phosphate + 2 ADP + phosphate + 2 H(+). Its pathway is amino-acid biosynthesis; L-arginine biosynthesis; carbamoyl phosphate from bicarbonate: step 1/1. The protein operates within pyrimidine metabolism; UMP biosynthesis via de novo pathway; (S)-dihydroorotate from bicarbonate: step 1/3. Functionally, large subunit of the glutamine-dependent carbamoyl phosphate synthetase (CPSase). CPSase catalyzes the formation of carbamoyl phosphate from the ammonia moiety of glutamine, carbonate, and phosphate donated by ATP, constituting the first step of 2 biosynthetic pathways, one leading to arginine and/or urea and the other to pyrimidine nucleotides. The large subunit (synthetase) binds the substrates ammonia (free or transferred from glutamine from the small subunit), hydrogencarbonate and ATP and carries out an ATP-coupled ligase reaction, activating hydrogencarbonate by forming carboxy phosphate which reacts with ammonia to form carbamoyl phosphate. This Methanosarcina barkeri (strain Fusaro / DSM 804) protein is Carbamoyl phosphate synthase large chain.